We begin with the raw amino-acid sequence, 656 residues long: Spermatogenesis-associated protein 13 (656 aa).

A compositionally biased stretch (polar residues) spans 1–12 (MHPASVTTTSQD). The tract at residues 1–26 (MHPASVTTTSQDPCAPSGSCRGGRRR) is disordered. Serine 82 carries the phosphoserine modification. The tract at residues 85-115 (IGLDRVGRRRQMKTSNVSSDGGAESSALVDD) is disordered. Positions 102–154 (SSDGGAESSALVDDNGSEEDFSYEELCQANPRYLQPGGEQLAINELISDGSVV) are ABR (APC-binding region) domain. At serine 118 the chain carries Phosphoserine. The SH3 domain maps to 151-210 (GSVVCAEALWDHVTMDDQELGFKAGDVIQVLEASNKDWWWGRNEDKEAWFPASFVRLRVN). The interval 215–242 (PENCSSSHGEEQDEDTSKARHKHPESQQ) is disordered. A DH domain is found at 244 to 428 (MRTNVIQEIM…KNVACLINER (185 aa)). The PH domain occupies 459–565 (ELIHSGELTK…WLQAYADERR (107 aa)). Positions 565 to 656 (RRVQEDQQMG…TFHKLTPFRK (92 aa)) are C-terminal tail.

Interacts (via ABR and SH3 domain) with APC. The binding of APC enhances its GEF activity by relieving it from an autoinhibitory conformation, in which the ABR and SH3 domains are associated with the C-terminal tail. Interacts (via C-terminal tail) with PPP1R9B (via C-terminus). Interacts with RAC1. In terms of tissue distribution, expression is aberrantly enhanced in most colorectal tumors.

It localises to the cytoplasm. Its subcellular location is the cell projection. The protein resides in the filopodium. It is found in the lamellipodium. The protein localises to the ruffle membrane. It localises to the podosome. With respect to regulation, both the ABR and the SH3 domains contribute to maintaining the protein in an inhibited conformation by associating with the C-terminal tail. Binding of these domains to the C-terminal tail inhibits the activity of the protein by blocking a region that is required for its GEF activity. In terms of biological role, acts as a guanine nucleotide exchange factor (GEF) for RHOA, RAC1 and CDC42 GTPases. Regulates cell migration and adhesion assembly and disassembly through a RAC1, PI3K, RHOA and AKT1-dependent mechanism. Increases both RAC1 and CDC42 activity, but decreases the amount of active RHOA. Required for MMP9 up-regulation via the JNK signaling pathway in colorectal tumor cells. Involved in tumor angiogenesis and may play a role in intestinal adenoma formation and tumor progression. This Mus musculus (Mouse) protein is Spermatogenesis-associated protein 13 (Spata13).